Consider the following 86-residue polypeptide: RNA-binding protein Hfq (86 aa).

The Sm domain maps to 9–68; that stretch reads DPYLNTLRKEKVPVSIYLVNGIKLQGSIESFDQFVVLLKNTVSQMVYKHAISTVVPARPV. The interval 66-86 is disordered; that stretch reads RPVRLPSPTDSEHGDSEPGNA. Residues 75-86 show a composition bias toward basic and acidic residues; sequence DSEHGDSEPGNA.

Belongs to the Hfq family. In terms of assembly, homohexamer.

Its function is as follows. RNA chaperone that binds small regulatory RNA (sRNAs) and mRNAs to facilitate mRNA translational regulation in response to envelope stress, environmental stress and changes in metabolite concentrations. Also binds with high specificity to tRNAs. The chain is RNA-binding protein Hfq from Pseudomonas putida (strain ATCC 700007 / DSM 6899 / JCM 31910 / BCRC 17059 / LMG 24140 / F1).